Here is a 592-residue protein sequence, read N- to C-terminus: A-type ATP synthase subunit A (592 aa).

Gly-231–Thr-238 is an ATP binding site.

It belongs to the ATPase alpha/beta chains family. As to quaternary structure, has multiple subunits with at least A(3), B(3), C, D, E, F, H, I and proteolipid K(x).

It localises to the cell membrane. It carries out the reaction ATP + H2O + 4 H(+)(in) = ADP + phosphate + 5 H(+)(out). Functionally, component of the A-type ATP synthase that produces ATP from ADP in the presence of a proton gradient across the membrane. The A chain is the catalytic subunit. This chain is A-type ATP synthase subunit A, found in Staphylothermus marinus (strain ATCC 43588 / DSM 3639 / JCM 9404 / F1).